The primary structure comprises 386 residues: S-adenosylmethionine synthase (386 aa).

Histidine 17 is a binding site for ATP. Residue aspartate 19 coordinates Mg(2+). Residue glutamate 45 coordinates K(+). The L-methionine site is built by glutamate 58 and glutamine 101. The flexible loop stretch occupies residues 101–111 (QSPDISQGVTE). ATP is bound by residues 168–170 (DAK), aspartate 242, 248–249 (RK), alanine 265, and lysine 269. Aspartate 242 is a binding site for L-methionine. Lysine 273 is an L-methionine binding site.

The protein belongs to the AdoMet synthase family. Homotetramer; dimer of dimers. The cofactor is Mg(2+). K(+) serves as cofactor.

It is found in the cytoplasm. It carries out the reaction L-methionine + ATP + H2O = S-adenosyl-L-methionine + phosphate + diphosphate. Its pathway is amino-acid biosynthesis; S-adenosyl-L-methionine biosynthesis; S-adenosyl-L-methionine from L-methionine: step 1/1. Catalyzes the formation of S-adenosylmethionine (AdoMet) from methionine and ATP. The overall synthetic reaction is composed of two sequential steps, AdoMet formation and the subsequent tripolyphosphate hydrolysis which occurs prior to release of AdoMet from the enzyme. This chain is S-adenosylmethionine synthase, found in Leptospira borgpetersenii serovar Hardjo-bovis (strain JB197).